The chain runs to 463 residues: Siroheme synthase (463 aa).

Positions 1-203 (MDYLPLFHKL…GQGAEAERLL (203 aa)) are precorrin-2 dehydrogenase /sirohydrochlorin ferrochelatase. Residues 22–23 (EI) and 43–44 (PE) contribute to the NAD(+) site. A Phosphoserine modification is found at S128. A uroporphyrinogen-III C-methyltransferase region spans residues 216 to 463 (GEVYLVGAGP…LAWFEGAQNS (248 aa)). P225 serves as a coordination point for S-adenosyl-L-methionine. D248 functions as the Proton acceptor in the catalytic mechanism. K270 acts as the Proton donor in catalysis. Residues 301-303 (GGD), I306, 331-332 (TA), M383, and G412 contribute to the S-adenosyl-L-methionine site.

This sequence in the N-terminal section; belongs to the precorrin-2 dehydrogenase / sirohydrochlorin ferrochelatase family. The protein in the C-terminal section; belongs to the precorrin methyltransferase family.

It catalyses the reaction uroporphyrinogen III + 2 S-adenosyl-L-methionine = precorrin-2 + 2 S-adenosyl-L-homocysteine + H(+). The catalysed reaction is precorrin-2 + NAD(+) = sirohydrochlorin + NADH + 2 H(+). The enzyme catalyses siroheme + 2 H(+) = sirohydrochlorin + Fe(2+). It participates in cofactor biosynthesis; adenosylcobalamin biosynthesis; precorrin-2 from uroporphyrinogen III: step 1/1. It functions in the pathway cofactor biosynthesis; adenosylcobalamin biosynthesis; sirohydrochlorin from precorrin-2: step 1/1. Its pathway is porphyrin-containing compound metabolism; siroheme biosynthesis; precorrin-2 from uroporphyrinogen III: step 1/1. The protein operates within porphyrin-containing compound metabolism; siroheme biosynthesis; siroheme from sirohydrochlorin: step 1/1. It participates in porphyrin-containing compound metabolism; siroheme biosynthesis; sirohydrochlorin from precorrin-2: step 1/1. In terms of biological role, multifunctional enzyme that catalyzes the SAM-dependent methylations of uroporphyrinogen III at position C-2 and C-7 to form precorrin-2 via precorrin-1. Then it catalyzes the NAD-dependent ring dehydrogenation of precorrin-2 to yield sirohydrochlorin. Finally, it catalyzes the ferrochelation of sirohydrochlorin to yield siroheme. This chain is Siroheme synthase, found in Pseudomonas entomophila (strain L48).